Reading from the N-terminus, the 59-residue chain is Potassium channel toxin alpha-KTx 4.1 (59 aa).

Positions 1–22 (MKAFYGILIIFILISMIDLSKQ) are cleaved as a signal peptide. Cystine bridges form between C29-C50, C35-C55, and C39-C57. Residues 48-55 (GKCMNGKC) are interaction with Ca(2+)-activated K(+) channels.

Belongs to the short scorpion toxin superfamily. Potassium channel inhibitor family. Alpha-KTx 04 subfamily. As to expression, expressed by the venom gland.

It localises to the secreted. Its function is as follows. Potently blocks Kv1.1/KCNA1 (85%), Kv1.2/KCNA2 (91%), Kv1.3/KCNA3 (89%), Kv1.6/KCNA6 (94%), and Shaker (97%). The sequence is that of Potassium channel toxin alpha-KTx 4.1 from Tityus serrulatus (Brazilian scorpion).